A 454-amino-acid chain; its full sequence is Inner membrane transport protein YajR (454 aa).

The Periplasmic segment spans residues 1–14; sequence MNDYKMTPGERRAT. Residues 15-35 traverse the membrane as a helical segment; the sequence is WGLGTVFSLRMLGMFMVLPVL. Residues 36–47 are Cytoplasmic-facing; it reads TTYGMALQGASE. A helical membrane pass occupies residues 48–68; the sequence is ALIGIAIGIYGLTQAVFQIPF. At 69–84 the chain is on the periplasmic side; that stretch reads GLLSDRIGRKPLIVGG. Residues 85 to 105 form a helical membrane-spanning segment; sequence LAVFAAGSVIAALSDSIWGII. At 106-137 the chain is on the cytoplasmic side; the sequence is LGRALQGSGAIAAAVMALLSDLTREQNRTKAM. A helical transmembrane segment spans residues 138–158; it reads AFIGVSFGITFAIAMVLGPII. Residues 159-165 lie on the Periplasmic side of the membrane; it reads THKLGLH. Residues 166 to 186 traverse the membrane as a helical segment; sequence ALFWMIAILATTGIALTIWVV. The Cytoplasmic portion of the chain corresponds to 187-216; sequence PNSSTHVLNRESGMVKGSFSKVLAEPRLLK. Residues 217-237 form a helical membrane-spanning segment; that stretch reads LNFGIMCLHILLMSTFVALPG. The Periplasmic portion of the chain corresponds to 238–252; that stretch reads QLADAGFPAAEHWKV. Residues 253-273 traverse the membrane as a helical segment; the sequence is YLATMLIAFGSVVPFIIYAEV. Residues 274 to 279 are Cytoplasmic-facing; sequence KRKMKQ. The chain crosses the membrane as a helical span at residues 280-300; the sequence is VFVFCVGLIVVAEIVLWNAQT. Topologically, residues 301–306 are periplasmic; that stretch reads QFWQLV. The helical transmembrane segment at 307-327 threads the bilayer; it reads VGVQLFFVAFNLMEALLPSLI. The Cytoplasmic segment spans residues 328-340; it reads SKESPAGYKGTAM. The chain crosses the membrane as a helical span at residues 341 to 361; the sequence is GVYSTSQFLGVAIGGSLGGWI. Topologically, residues 362–363 are periplasmic; the sequence is NG. The chain crosses the membrane as a helical span at residues 364-384; that stretch reads MFDGQGVFLAGAMLAAVWLTV. At 385 to 454 the chain is on the cytoplasmic side; the sequence is ASTMKEPPYV…FEIEQAIRQA (70 aa).

Belongs to the major facilitator superfamily.

The protein localises to the cell inner membrane. The protein is Inner membrane transport protein YajR (yajR) of Escherichia coli (strain K12).